Reading from the N-terminus, the 514-residue chain is Protein translocase subunit SecD (514 aa).

Transmembrane regions (helical) follow at residues 7-27, 357-377, 389-409, 448-470, and 482-502; these read WKIF…LPNF, IIGF…LGLF, VLAL…AGII, FATI…IFGV, and IGII…IDIW.

The protein belongs to the SecD/SecF family. SecD subfamily. In terms of assembly, forms a complex with SecF. Part of the essential Sec protein translocation apparatus which comprises SecA, SecYEG and auxiliary proteins SecDF-YajC and YidC.

Its subcellular location is the cell inner membrane. Its function is as follows. Part of the Sec protein translocase complex. Interacts with the SecYEG preprotein conducting channel. SecDF uses the proton motive force (PMF) to complete protein translocation after the ATP-dependent function of SecA. In Rickettsia bellii (strain RML369-C), this protein is Protein translocase subunit SecD.